A 418-amino-acid polypeptide reads, in one-letter code: ADP-ribose glycohydrolase MACROD2 (418 aa).

Residues 57 to 238 (PEEIQVKNSL…IYKRKLNEFF (182 aa)) enclose the Macro domain. Substrate is bound by residues 75 to 77 (GDI), 88 to 90 (AAN), 95 to 100 (GGGGVD), 183 to 189 (ISTGIYG), and phenylalanine 222. The disordered stretch occupies residues 238 to 418 (FPKDGGDDEE…KDTNDDANEA (181 aa)). Residues 250–262 (KGDSDEMKEDTEG) are compositionally biased toward basic and acidic residues. A compositionally biased stretch (polar residues) spans 295-318 (TGNTQDMTAMSLETNEGNDVSSPA). Over residues 321 to 360 (PLKEGEELSEAKITGEKISVEPKTPEPEDAKMTVEEKSQE) the composition is skewed to basic and acidic residues. A compositionally biased stretch (acidic residues) spans 377–389 (ETEDLDGDSEEPS).

Belongs to the MacroD-type family. MacroD1/2-like subfamily.

The protein localises to the nucleus. It catalyses the reaction 2''-O-acetyl-ADP-D-ribose + H2O = ADP-D-ribose + acetate + H(+). The enzyme catalyses 4-O-(ADP-D-ribosyl)-L-aspartyl-[protein] + H2O = L-aspartyl-[protein] + ADP-D-ribose + H(+). The catalysed reaction is 5-O-(ADP-D-ribosyl)-L-glutamyl-[protein] + H2O = L-glutamyl-[protein] + ADP-D-ribose + H(+). It carries out the reaction alpha-NAD(+) + H2O = ADP-D-ribose + nicotinamide + H(+). With respect to regulation, subject to product inhibition by ADP-ribose. Removes ADP-ribose from aspartate and glutamate residues in proteins bearing a single ADP-ribose moiety. Inactive towards proteins bearing poly-ADP-ribose. Deacetylates O-acetyl-ADP ribose, a signaling molecule generated by the deacetylation of acetylated lysine residues in histones and other proteins. This is ADP-ribose glycohydrolase MACROD2 from Xenopus laevis (African clawed frog).